The primary structure comprises 878 residues: Alanine--tRNA ligase (878 aa).

The Zn(2+) site is built by His-567, His-571, Cys-668, and His-672.

This sequence belongs to the class-II aminoacyl-tRNA synthetase family. Requires Zn(2+) as cofactor.

It localises to the cytoplasm. The catalysed reaction is tRNA(Ala) + L-alanine + ATP = L-alanyl-tRNA(Ala) + AMP + diphosphate. Its function is as follows. Catalyzes the attachment of alanine to tRNA(Ala) in a two-step reaction: alanine is first activated by ATP to form Ala-AMP and then transferred to the acceptor end of tRNA(Ala). Also edits incorrectly charged Ser-tRNA(Ala) and Gly-tRNA(Ala) via its editing domain. In Magnetococcus marinus (strain ATCC BAA-1437 / JCM 17883 / MC-1), this protein is Alanine--tRNA ligase.